A 506-amino-acid polypeptide reads, in one-letter code: Acetaldehyde dehydrogenase (506 aa).

Residues Glu262 and Cys301 contribute to the active site.

This sequence belongs to the aldehyde dehydrogenase family.

It catalyses the reaction acetaldehyde + NAD(+) + H2O = acetate + NADH + 2 H(+). The protein operates within alcohol metabolism; ethanol degradation; acetate from ethanol: step 2/2. In terms of biological role, catalyzes the NAD(+)-dependent oxidation of acetaldehyde to acetate. Is likely a component of the ethanol oxidation system that allows P.aeruginosa to grow on ethanol as the sole carbon and energy source. The protein is Acetaldehyde dehydrogenase of Pseudomonas aeruginosa.